Reading from the N-terminus, the 147-residue chain is Protegrin-2 (147 aa).

The N-terminal stretch at 1–29 (METQRASLCLGRWSLWLLLLALVVPSASA) is a signal peptide. A propeptide spanning residues 30–130 (QALSYREAVL…DITCNEVQGV (101 aa)) is cleaved from the precursor. The disordered stretch occupies residues 61 to 80 (DQPPKADEDPGTPKPVSFTV). Cystine bridges form between Cys85-Cys96, Cys107-Cys124, Cys136-Cys145, and Cys138-Cys143. Val146 carries the valine amide modification.

It belongs to the cathelicidin family.

The protein localises to the secreted. Its function is as follows. Microbicidal activity. Active against E.coli, Listeria monocytogenes and C.albicans, in vitro. The protein is Protegrin-2 (NPG2) of Sus scrofa (Pig).